Here is an 83-residue protein sequence, read N- to C-terminus: Exodeoxyribonuclease 7 small subunit (83 aa).

Belongs to the XseB family. Heterooligomer composed of large and small subunits.

It is found in the cytoplasm. It catalyses the reaction Exonucleolytic cleavage in either 5'- to 3'- or 3'- to 5'-direction to yield nucleoside 5'-phosphates.. Its function is as follows. Bidirectionally degrades single-stranded DNA into large acid-insoluble oligonucleotides, which are then degraded further into small acid-soluble oligonucleotides. This chain is Exodeoxyribonuclease 7 small subunit, found in Nitrobacter hamburgensis (strain DSM 10229 / NCIMB 13809 / X14).